Reading from the N-terminus, the 185-residue chain is Ribosome-recycling factor (185 aa).

Belongs to the RRF family.

Its subcellular location is the cytoplasm. Functionally, responsible for the release of ribosomes from messenger RNA at the termination of protein biosynthesis. May increase the efficiency of translation by recycling ribosomes from one round of translation to another. This chain is Ribosome-recycling factor, found in Geobacillus thermodenitrificans (strain NG80-2).